The sequence spans 539 residues: 4-coumarate--CoA ligase 5 (539 aa).

6 residues coordinate ATP: Ser-185, Ser-186, Gly-187, Thr-188, Thr-189, and Lys-193. Residues Tyr-235 and Ser-239 each contribute to the (E)-4-coumaroyl-AMP site. Arg-256 serves as a coordination point for CoA. The segment at 258–327 is SBD1; the sequence is DTVKMLQLVE…AKLPNAVLGQ (70 aa). Ala-305, Gln-327, Gly-328, Thr-332, and Met-340 together coordinate (E)-4-coumaroyl-AMP. Residues Gln-327, Gly-328, and Thr-332 each coordinate ATP. The SBD2 stretch occupies residues 328–395; it reads GYGMTEAGPV…IRGKQIMKGY (68 aa). Residues Asp-416 and Arg-431 each contribute to the ATP site. (E)-4-coumaroyl-AMP is bound by residues Lys-433 and Lys-437. The CoA site is built by Lys-439 and Gly-440. Lys-522 contributes to the ATP binding site.

The protein belongs to the ATP-dependent AMP-binding enzyme family. Mg(2+) serves as cofactor. As to expression, expressed in roots, stems, leaf blades, leaf sheaths and spikelets.

It catalyses the reaction (E)-ferulate + ATP + CoA = (E)-feruloyl-CoA + AMP + diphosphate. It carries out the reaction (E)-4-coumarate + ATP + CoA = (E)-4-coumaroyl-CoA + AMP + diphosphate. The catalysed reaction is (E)-sinapate + ATP + CoA = (E)-sinapoyl-CoA + AMP + diphosphate. The enzyme catalyses (E)-caffeate + ATP + CoA = (E)-caffeoyl-CoA + AMP + diphosphate. It catalyses the reaction (E)-cinnamate + ATP + CoA = (E)-cinnamoyl-CoA + AMP + diphosphate. It carries out the reaction (E)-ferulate + ATP + H(+) = (E)-feruloyl-AMP + diphosphate. The catalysed reaction is (E)-feruloyl-AMP + CoA = (E)-feruloyl-CoA + AMP + H(+). The enzyme catalyses (E)-4-coumarate + ATP + H(+) = (E)-4-coumaroyl-AMP + diphosphate. It catalyses the reaction (E)-4-coumaroyl-AMP + CoA = (E)-4-coumaroyl-CoA + AMP + H(+). It carries out the reaction (E)-sinapate + ATP + H(+) = (E)-sinapoyl-AMP + diphosphate. The catalysed reaction is (E)-sinapoyl-AMP + CoA = (E)-sinapoyl-CoA + AMP + H(+). The enzyme catalyses (E)-caffeate + ATP + H(+) = (E)-caffeoyl-AMP + diphosphate. It catalyses the reaction (E)-caffeoyl-AMP + CoA = (E)-caffeoyl-CoA + AMP + H(+). It participates in phytoalexin biosynthesis; 3,4',5-trihydroxystilbene biosynthesis; 3,4',5-trihydroxystilbene from trans-4-coumarate: step 1/2. Involved in the phenylpropanoid metabolism by mediating the activation of a number of hydroxycinnamates for the biosynthesis of monolignols and other phenolic secondary metabolites. Catalyzes the formation of CoA esters of cinnamate, 4-coumarate, caffeate and ferulate. Is also able to convert sinapate to its corresponding CoA ester, a reaction that is rarely observed in 4CL catalysis. Is more efficient with substrates in the following order: ferulate &gt; 4-coumarate &gt; sinapate &gt; caffeate &gt; cinnamate. Follows a two-step reaction mechanism, wherein the carboxylate substrate first undergoes adenylation by ATP, followed by a thioesterification in the presence of CoA to yield the final CoA thioesters. In Oryza sativa subsp. japonica (Rice), this protein is 4-coumarate--CoA ligase 5.